The sequence spans 550 residues: Glutamyl-tRNA(Gln) amidotransferase subunit A, mitochondrial (550 aa).

Active-site charge relay system residues include lysine 79 and serine 171. Serine 195 (acyl-ester intermediate) is an active-site residue. The tract at residues 371–390 is disordered; that stretch reads EKDENKVDNDNDDDDDVDEN.

This sequence belongs to the amidase family. GatA subfamily. As to quaternary structure, subunit of the heterotrimeric GatCAB amidotransferase (AdT) complex, composed of A, B and C subunits.

It localises to the mitochondrion. The enzyme catalyses L-glutamyl-tRNA(Gln) + L-glutamine + ATP + H2O = L-glutaminyl-tRNA(Gln) + L-glutamate + ADP + phosphate + H(+). Functionally, allows the formation of correctly charged Gln-tRNA(Gln) through the transamidation of misacylated Glu-tRNA(Gln) in the mitochondria. The reaction takes place in the presence of glutamine and ATP through an activated gamma-phospho-Glu-tRNA(Gln). In Dictyostelium discoideum (Social amoeba), this protein is Glutamyl-tRNA(Gln) amidotransferase subunit A, mitochondrial.